A 328-amino-acid polypeptide reads, in one-letter code: Malate dehydrogenase (328 aa).

Residue 11-17 (GAAGQIG) coordinates NAD(+). Substrate is bound by residues R92 and R98. Residues N105, Q112, and 129–131 (VGN) contribute to the NAD(+) site. Positions 131 and 162 each coordinate substrate. The Proton acceptor role is filled by H187.

This sequence belongs to the LDH/MDH superfamily. MDH type 2 family.

It catalyses the reaction (S)-malate + NAD(+) = oxaloacetate + NADH + H(+). Catalyzes the reversible oxidation of malate to oxaloacetate. In Coxiella burnetii (strain CbuG_Q212) (Coxiella burnetii (strain Q212)), this protein is Malate dehydrogenase.